A 296-amino-acid polypeptide reads, in one-letter code: Nucleotide-binding protein SAG0531 (296 aa).

Gly13–Thr20 contacts ATP. Asp63–Ser66 provides a ligand contact to GTP.

The protein belongs to the RapZ-like family.

Functionally, displays ATPase and GTPase activities. The protein is Nucleotide-binding protein SAG0531 of Streptococcus agalactiae serotype V (strain ATCC BAA-611 / 2603 V/R).